The primary structure comprises 164 residues: Cell division protein SepF (164 aa).

Residues 21–71 (YQQGQQPAQQQQSPVQAVPTPVPAPQQQAKRAPVTPLHKPSTTTRNAAPAE) are disordered. Residues 22-49 (QQGQQPAQQQQSPVQAVPTPVPAPQQQA) are compositionally biased toward low complexity.

Belongs to the SepF family. As to quaternary structure, homodimer. Interacts with FtsZ.

It localises to the cytoplasm. Functionally, cell division protein that is part of the divisome complex and is recruited early to the Z-ring. Probably stimulates Z-ring formation, perhaps through the cross-linking of FtsZ protofilaments. Its function overlaps with FtsA. The protein is Cell division protein SepF of Clavibacter sepedonicus (Clavibacter michiganensis subsp. sepedonicus).